The following is a 203-amino-acid chain: dITP/XTP pyrophosphatase (203 aa).

Residue T8–K13 coordinates substrate. 2 residues coordinate Mg(2+): E41 and D70. The active-site Proton acceptor is D70. Residues S71, F153 to D156, K176, and H181 to R182 contribute to the substrate site.

The protein belongs to the HAM1 NTPase family. Homodimer. Mg(2+) serves as cofactor.

It carries out the reaction XTP + H2O = XMP + diphosphate + H(+). The enzyme catalyses dITP + H2O = dIMP + diphosphate + H(+). It catalyses the reaction ITP + H2O = IMP + diphosphate + H(+). Pyrophosphatase that catalyzes the hydrolysis of nucleoside triphosphates to their monophosphate derivatives, with a high preference for the non-canonical purine nucleotides XTP (xanthosine triphosphate), dITP (deoxyinosine triphosphate) and ITP. Seems to function as a house-cleaning enzyme that removes non-canonical purine nucleotides from the nucleotide pool, thus preventing their incorporation into DNA/RNA and avoiding chromosomal lesions. This chain is dITP/XTP pyrophosphatase, found in Listeria monocytogenes serotype 4b (strain F2365).